The chain runs to 365 residues: Peptide chain release factor 2 (365 aa).

An N5-methylglutamine modification is found at glutamine 252.

The protein belongs to the prokaryotic/mitochondrial release factor family. Methylated by PrmC. Methylation increases the termination efficiency of RF2.

The protein localises to the cytoplasm. In terms of biological role, peptide chain release factor 2 directs the termination of translation in response to the peptide chain termination codons UGA and UAA. In Pectobacterium atrosepticum (strain SCRI 1043 / ATCC BAA-672) (Erwinia carotovora subsp. atroseptica), this protein is Peptide chain release factor 2.